A 192-amino-acid chain; its full sequence is Putative ripening-related protein 2 (192 aa).

Positions 1-26 (MATTNCLLALAIAGLVLVSLPGLSRG) are cleaved as a signal peptide.

The protein belongs to the kiwellin family.

Its subcellular location is the secreted. The protein is Putative ripening-related protein 2 of Oryza sativa subsp. japonica (Rice).